The primary structure comprises 897 residues: DNA polymerase I (897 aa).

Positions 1 to 317 (MEQPVIKEGT…ILDNTPALDN (317 aa)) constitute a 5'-3' exonuclease domain. The 3'-5' exonuclease domain maps to 318–494 (APKKSRMIVL…RLCEYFEKGG (177 aa)). Residues 498-896 (DLLTLARDIE…FIAKRWNELK (399 aa)) form a polymerase region.

The protein belongs to the DNA polymerase type-A family. As to quaternary structure, single-chain monomer with multiple functions.

It carries out the reaction DNA(n) + a 2'-deoxyribonucleoside 5'-triphosphate = DNA(n+1) + diphosphate. In terms of biological role, in addition to polymerase activity, this DNA polymerase exhibits 3'-5' and 5'-3' exonuclease activity. This chain is DNA polymerase I (polA), found in Helicobacter pylori (strain J99 / ATCC 700824) (Campylobacter pylori J99).